The sequence spans 371 residues: Glutamate 5-kinase (371 aa).

ATP is bound at residue lysine 10. Substrate-binding residues include serine 50, aspartate 137, and asparagine 149. ATP contacts are provided by residues 169 to 170 (SD) and 208 to 214 (TGGMYTK). One can recognise a PUA domain in the interval 274 to 352 (QGKVYIDDGA…EEIKNILGED (79 aa)).

Belongs to the glutamate 5-kinase family.

It is found in the cytoplasm. It catalyses the reaction L-glutamate + ATP = L-glutamyl 5-phosphate + ADP. Its pathway is amino-acid biosynthesis; L-proline biosynthesis; L-glutamate 5-semialdehyde from L-glutamate: step 1/2. Catalyzes the transfer of a phosphate group to glutamate to form L-glutamate 5-phosphate. In Dictyoglomus thermophilum (strain ATCC 35947 / DSM 3960 / H-6-12), this protein is Glutamate 5-kinase.